Consider the following 344-residue polypeptide: Coproporphyrin III ferrochelatase (344 aa).

Ser52 is a Fe-coproporphyrin III binding site. Cys113 contributes to the [2Fe-2S] cluster binding site. Tyr116 is a Fe-coproporphyrin III binding site. Residues His172 and Glu255 each contribute to the Fe(2+) site. The [2Fe-2S] cluster site is built by Cys316, Cys325, and Cys330.

The protein belongs to the ferrochelatase family. [2Fe-2S] cluster is required as a cofactor.

It localises to the cytoplasm. It catalyses the reaction Fe-coproporphyrin III + 2 H(+) = coproporphyrin III + Fe(2+). It functions in the pathway porphyrin-containing compound metabolism; protoheme biosynthesis. Involved in coproporphyrin-dependent heme b biosynthesis. Catalyzes the insertion of ferrous iron into coproporphyrin III to form Fe-coproporphyrin III. The chain is Coproporphyrin III ferrochelatase from Mycobacterium bovis (strain ATCC BAA-935 / AF2122/97).